The sequence spans 287 residues: tRNA selenocysteine 1-associated protein 1 (287 aa).

RRM domains are found at residues 3-86 (ASLW…YATY) and 96-175 (YSLF…VAIP).

Belongs to the RRM TRSPAP family. In terms of assembly, component of the tRNA(Sec) complex composed at least of EEFSEC, SECISBP2, SEPHS1, SEPSECS, TRNAU1AP and tRNA(Sec). Found in a complex with tRNA(Sec). Interacts with SEPSECS. Associates with mRNP and/or polysomes. Found in a complex with EEFSEC, SECISBP2, TRNAU1AP and tRNA(Sec).

Its subcellular location is the nucleus. The protein resides in the cytoplasm. Its function is as follows. Involved in the early steps of selenocysteine biosynthesis and tRNA(Sec) charging to the later steps resulting in the cotranslational incorporation of selenocysteine into selenoproteins. Stabilizes the SECISBP2, EEFSEC and tRNA(Sec) complex. May be involved in the methylation of tRNA(Sec). Enhances efficiency of selenoproteins synthesis. The sequence is that of tRNA selenocysteine 1-associated protein 1 (TRNAU1AP) from Homo sapiens (Human).